We begin with the raw amino-acid sequence, 1956 residues long: MELPFASVGTTNFRRFTPESLAEIEKQIAAHRAAKKARTKHRGQEDKGEKPRPQLDLKACNQLPKFYGELPAELVGEPLEDLDPFYSTHRTFMVLNKSRTISRFSATWALWLFSPFNLIRRTAIKVSVHSWFSIFITITILVNCVCMTRTDLPEKVEYVFTVIYTFEALIKILARGFCLNEFTYLRDPWNWLDFSVITLAYVGAAIDLRGISGLRTFRVLRALKTVSVIPGLKVIVGALIHSVRKLADVTILTVFCLSVFALVGLQLFKGNLKNKCIRNGTDPHKADNLSSEMAEYIFIKPGTTDPLLCGNGSDAGHCPGGYVCLKTPDNPDFNYTSFDSFAWAFLSLFRLMTQDSWERLYQQTLRASGKMYMVFFVLVIFLGSFYLVNLILAVVTMAYEEQSQATIAEIEAKEKKFQEALEVLQKEQEVLAALGIDTTSLQSHSGSPLASKNANERRPRVKSRVSEGSTDDNRSPQSDPYNQRRMSFLGLSSGRRRASHGSVFHFRAPSQDISFPDGITDDGVFHGDQESRRGSILLGRGAGQTGPLPRSPLPQSPNPGRRHGEEGQLGVPTGELTAGAPEGPALDTTGQKSFLSAGYLNEPFRAQRAMSVVSIMTSVIEELEESKLKCPPCLISFAQKYLIWECCPKWRKFKMALFELVTDPFAELTITLCIVVNTVFMAMEHYPMTDAFDAMLQAGNIVFTVFFTMEMAFKIIAFDPYYYFQKKWNIFDCVIVTVSLLELSASKKGSLSVLRTFRLLRVFKLAKSWPTLNTLIKIIGNSVGALGNLTFILAIIVFIFALVGKQLLSEDYGCRKDGVSVWNGEKLRWHMCDFFHSFLVVFRILCGEWIENMWVCMEVSQKSICLILFLTVMVLGNLVVLNLFIALLLNSFSADNLTAPEDDGEVNNLQLALARIQVLGHRASRAIASYISSHCRFRWPKVETQLGMKPPLTSSEAKNHIATDAVSAAVGNLTKPALSSPKENHGDFITDPNVWVSVPIAEGESDLDELEEDMEQASQSSWQEEDPKGQQEQLPQVQKCENHQAARSPASMMSSEDLAPYLGESWKRKDSPQVPAEGVDDTSSSEGSTVDCPDPEEILRKIPELADDLDEPDDCFTEGCTRRCPCCNVNTSKSPWATGWQVRKTCYRIVEHSWFESFIIFMILLSSGALAFEDNYLEEKPRVKSVLEYTDRVFTFIFVFEMLLKWVAYGFKKYFTNAWCWLDFLIVNISLTSLIAKILEYSDVASIKALRTLRALRPLRALSRFEGMRVVVDALVGAIPSIMNVLLVCLIFWLIFSIMGVNLFAGKFSKCVDTRNNPFSNVNSTMVNNKSECHNQNSTGHFFWVNVKVNFDNVAMGYLALLQVATFKGWMDIMYAAVDSGEINSQPNWENNLYMYLYFVVFIIFGGFFTLNLFVGVIIDNFNQQKKKLGGQDIFMTEEQKKYYNAMKKLGSKKPQKPIPRPLNKYQGFVFDIVTRQAFDIIIMVLICLNMITMMVETDEQGEEKTKVLGRINQFFVAVFTGECVMKMFALRQYYFTNGWNVFDFIVVILSIGSLLFSAILKSLENYFSPTLFRVIRLARIGRILRLIRAAKGIRTLLFALMMSLPALFNIGLLLFLVMFIYSIFGMASFANVVDEAGIDDMFNFKTFGNSMLCLFQITTSAGWDGLLSPILNTGPPYCDPNLPNSNGSRGNCGSPAVGIIFFTTYIIISFLIVVNMYIAVILENFNVATEESTEPLSEDDFDMFYETWEKFDPEATQFIAFSALSDFADTLSGPLRIPKPNQNILIQMDLPLVPGDKIHCLDILFAFTKNVLGESGELDSLKTNMEEKFMATNLSKASYEPIATTLRWKQEDLSATVIQKAYRSYMLHRSLTLSNTLHVPRAEEDGVSLPGEGYVTFMANSGLPDKSETASATSFPPSYDSVTRGLSDRANINPSSSMQNEDEVAAKEGNSPGPQ.

Residues 1 to 125 (MELPFASVGT…FNLIRRTAIK (125 aa)) lie on the Cytoplasmic side of the membrane. Residues 31–54 (HRAAKKARTKHRGQEDKGEKPRPQ) form a disordered region. A compositionally biased stretch (basic residues) spans 32–41 (RAAKKARTKH). Positions 42 to 54 (RGQEDKGEKPRPQ) are enriched in basic and acidic residues. The stretch at 116 to 404 (FNLIRRTAIK…VTMAYEEQSQ (289 aa)) is one I repeat. A helical membrane pass occupies residues 126–149 (VSVHSWFSIFITITILVNCVCMTR). Topologically, residues 150-154 (TDLPE) are extracellular. A helical membrane pass occupies residues 155-174 (KVEYVFTVIYTFEALIKILA). Residues 175–187 (RGFCLNEFTYLRD) lie on the Cytoplasmic side of the membrane. Residues 188-206 (PWNWLDFSVITLAYVGAAI) traverse the membrane as a helical segment. Residues 207–212 (DLRGIS) lie on the Extracellular side of the membrane. The chain crosses the membrane as a helical; Voltage-sensor span at residues 213-232 (GLRTFRVLRALKTVSVIPGL). Residues 233–248 (KVIVGALIHSVRKLAD) lie on the Cytoplasmic side of the membrane. A helical transmembrane segment spans residues 249 to 272 (VTILTVFCLSVFALVGLQLFKGNL). Residues 273–340 (KNKCIRNGTD…PDFNYTSFDS (68 aa)) lie on the Extracellular side of the membrane. A disulfide bond links C276 and C318. N-linked (GlcNAc...) asparagine glycosylation is found at N279, N288, N311, and N334. Residues 341-365 (FAWAFLSLFRLMTQDSWERLYQQTL) constitute an intramembrane region (pore-forming). Topologically, residues 366-372 (RASGKMY) are extracellular. The helical transmembrane segment at 373–398 (MVFFVLVIFLGSFYLVNLILAVVTMA) threads the bilayer. The Cytoplasmic portion of the chain corresponds to 399-658 (YEEQSQATIA…KWRKFKMALF (260 aa)). A phosphoserine mark is found at S440, S443, S466, and S478. A compositionally biased stretch (polar residues) spans 441–453 (LQSHSGSPLASKN). Disordered stretches follow at residues 441–484 (LQSH…YNQR) and 537–581 (LLGR…AGAP). The segment covering 475–484 (SPQSDPYNQR) has biased composition (polar residues). S611 and S614 each carry phosphoserine. The stretch at 646-910 (CCPKWRKFKM…EDDGEVNNLQ (265 aa)) is one II repeat. Residues 659–683 (ELVTDPFAELTITLCIVVNTVFMAM) form a helical membrane-spanning segment. The Extracellular portion of the chain corresponds to 684 to 694 (EHYPMTDAFDA). The chain crosses the membrane as a helical span at residues 695–718 (MLQAGNIVFTVFFTMEMAFKIIAF). The Cytoplasmic segment spans residues 719–726 (DPYYYFQK). A helical membrane pass occupies residues 727–746 (KWNIFDCVIVTVSLLELSAS). Residues 747 to 752 (KKGSLS) are Extracellular-facing. Residues 753-772 (VLRTFRLLRVFKLAKSWPTL) form a helical; Voltage-sensor membrane-spanning segment. Residues 773-788 (NTLIKIIGNSVGALGN) lie on the Cytoplasmic side of the membrane. A helical membrane pass occupies residues 789-809 (LTFILAIIVFIFALVGKQLLS). The Extracellular portion of the chain corresponds to 810 to 833 (EDYGCRKDGVSVWNGEKLRWHMCD). The segment at residues 834–854 (FFHSFLVVFRILCGEWIENMW) is an intramembrane region (pore-forming). Residues 855–863 (VCMEVSQKS) lie on the Extracellular side of the membrane. C856 and C865 are oxidised to a cystine. The chain crosses the membrane as a helical span at residues 864–889 (ICLILFLTVMVLGNLVVLNLFIALLL). Residues 890–1148 (NSFSADNLTA…GWQVRKTCYR (259 aa)) are Cytoplasmic-facing. The interval 1008–1094 (DELEEDMEQA…SEGSTVDCPD (87 aa)) is disordered. Residues 1141–1450 (QVRKTCYRIV…KKYYNAMKKL (310 aa)) form an III repeat. A helical membrane pass occupies residues 1149–1172 (IVEHSWFESFIIFMILLSSGALAF). Topologically, residues 1173-1185 (EDNYLEEKPRVKS) are extracellular. The chain crosses the membrane as a helical span at residues 1186-1211 (VLEYTDRVFTFIFVFEMLLKWVAYGF). The Cytoplasmic portion of the chain corresponds to 1212–1217 (KKYFTN). The helical transmembrane segment at 1218-1239 (AWCWLDFLIVNISLTSLIAKIL) threads the bilayer. Over 1240–1243 (EYSD) the chain is Extracellular. A helical; Voltage-sensor membrane pass occupies residues 1244 to 1265 (VASIKALRTLRALRPLRALSRF). The Cytoplasmic portion of the chain corresponds to 1266–1284 (EGMRVVVDALVGAIPSIMN). A helical membrane pass occupies residues 1285–1312 (VLLVCLIFWLIFSIMGVNLFAGKFSKCV). Residues 1313-1354 (DTRNNPFSNVNSTMVNNKSECHNQNSTGHFFWVNVKVNFDNV) lie on the Extracellular side of the membrane. N-linked (GlcNAc...) asparagine glycans are attached at residues N1323, N1329, and N1337. Residues 1355 to 1376 (AMGYLALLQVATFKGWMDIMYA) constitute an intramembrane region (pore-forming). The Extracellular portion of the chain corresponds to 1377–1392 (AVDSGEINSQPNWENN). A helical transmembrane segment spans residues 1393 to 1419 (LYMYLYFVVFIIFGGFFTLNLFVGVII). The Cytoplasmic portion of the chain corresponds to 1420-1472 (DNFNQQKKKLGGQDIFMTEEQKKYYNAMKKLGSKKPQKPIPRPLNKYQGFVFD). S1452 carries the phosphoserine; by PKC modification. An IV repeat occupies 1459 to 1758 (IPRPLNKYQG…WEKFDPEATQ (300 aa)). Residues 1473-1496 (IVTRQAFDIIIMVLICLNMITMMV) form a helical membrane-spanning segment. The Extracellular segment spans residues 1497-1507 (ETDEQGEEKTK). A helical membrane pass occupies residues 1508–1531 (VLGRINQFFVAVFTGECVMKMFAL). The Cytoplasmic portion of the chain corresponds to 1532 to 1537 (RQYYFT). A helical transmembrane segment spans residues 1538–1561 (NGWNVFDFIVVILSIGSLLFSAIL). Topologically, residues 1562–1573 (KSLENYFSPTLF) are extracellular. Residues 1574–1595 (RVIRLARIGRILRLIRAAKGIR) traverse the membrane as a helical; Voltage-sensor segment. Topologically, residues 1596 to 1610 (TLLFALMMSLPALFN) are cytoplasmic. A helical transmembrane segment spans residues 1611–1633 (IGLLLFLVMFIYSIFGMASFANV). The Extracellular segment spans residues 1634–1647 (VDEAGIDDMFNFKT). Residues 1648–1670 (FGNSMLCLFQITTSAGWDGLLSP) constitute an intramembrane region (pore-forming). The Extracellular segment spans residues 1671 to 1698 (ILNTGPPYCDPNLPNSNGSRGNCGSPAV). A glycan (N-linked (GlcNAc...) asparagine) is linked at N1687. A helical transmembrane segment spans residues 1699–1723 (GIIFFTTYIIISFLIVVNMYIAVIL). The Cytoplasmic segment spans residues 1724 to 1956 (ENFNVATEES…AKEGNSPGPQ (233 aa)). Positions 1852–1881 (EDLSATVIQKAYRSYMLHRSLTLSNTLHVP) constitute an IQ domain. The disordered stretch occupies residues 1906-1956 (DKSETASATSFPPSYDSVTRGLSDRANINPSSSMQNEDEVAAKEGNSPGPQ). Positions 1931 to 1940 (ANINPSSSMQ) are enriched in polar residues.

This sequence belongs to the sodium channel (TC 1.A.1.10) family. Nav1.8/SCN10A subfamily. The channel consists of an ion conducting pore forming alpha-subunit regulated by one or more associated auxiliary subunits SCN1B, SCN2B and SCN3B; electrophysiological properties may vary depending on the type of the associated beta subunits. Found in a number of complexes with PRX, DYNLT1 and PDZD2. Interacts with proteins such as FSTL1, PRX, DYNLT1, PDZD2, S100A10 and many others. Interacts with NEDD4 and NEDD4L. Ubiquitinated by NEDD4L; which promotes its endocytosis. In terms of processing, phosphorylation at Ser-1452 by PKC in a highly conserved cytoplasmic loop slows inactivation of the sodium channel and reduces peak sodium currents. Post-translationally, lacks the cysteine which covalently binds the conotoxin GVIIJ. This cysteine (position 815) is speculated in other sodium channel subunits alpha to be implied in covalent binding with the sodium channel subunit beta-2 or beta-4. As to expression, expressed in dorsal root ganglia, trigeminal ganglia, nodose ganglia and sciatic nerve.

The protein resides in the cell membrane. The catalysed reaction is Na(+)(in) = Na(+)(out). Functionally, tetrodotoxin-resistant channel that mediates the voltage-dependent sodium ion permeability of excitable membranes. Assuming opened or closed conformations in response to the voltage difference across the membrane, the protein forms a sodium-selective channel through which sodium ions may pass in accordance with their electrochemical gradient. Plays a role in neuropathic pain mechanisms. The sequence is that of Sodium channel protein type 10 subunit alpha from Rattus norvegicus (Rat).